Reading from the N-terminus, the 61-residue chain is U-poneritoxin(01)-Om5a (61 aa).

The signal sequence occupies residues 1–23 (MKLSALSLAFAIILMMTIMYTKA). Residues 24 to 41 (DADASADAEADADAEAEA) constitute a propeptide that is removed on maturation. Glutamine amide is present on Q59.

This sequence belongs to the formicidae venom precursor-01 superfamily. In terms of processing, truncated sequences of this peptide have also been found in the venom. It is possible they have been cleaved in the venom. In terms of tissue distribution, expressed by the venom gland.

The protein localises to the secreted. Functionally, acidic peptide with potent hemolytic activities (94.8% at 50 uM). It also shows low antimicrobial activities against E.coli (MIC=50uM), as well as histamine-releasing activity (28.3% at 10 uM). Does not have activity against S.aureus, and S.cerevisiae. The sequence is that of U-poneritoxin(01)-Om5a from Odontomachus monticola (Trap-jaw ant).